Here is a 103-residue protein sequence, read N- to C-terminus: Small ribosomal subunit protein uS10 (103 aa).

It belongs to the universal ribosomal protein uS10 family. Part of the 30S ribosomal subunit.

Functionally, involved in the binding of tRNA to the ribosomes. The polypeptide is Small ribosomal subunit protein uS10 (Syntrophobacter fumaroxidans (strain DSM 10017 / MPOB)).